The chain runs to 495 residues: Bile acid-sensitive ion channel (495 aa).

The segment at 1 to 30 is binds the plasma membrane and stabilizes the channel in the closed state; that stretch reads MEHTEKSQVHAEKGLLGKIKRYLSKRPLPS. Topologically, residues 1–61 are cytoplasmic; it reads MEHTEKSQVH…NIAQNQNKVR (61 aa). A helical transmembrane segment spans residues 62–82; it reads KVIWLAVVLGSVSLLVWQIYS. The Extracellular portion of the chain corresponds to 83 to 459; it reads RLVNYFTWPT…GLFCGASLIT (377 aa). Intrachain disulfides connect C112/C207, C185/C192, C298/C377, C315/C373, C328/C350, and C330/C342. Residues N147, N163, and N179 are each glycosylated (N-linked (GlcNAc...) asparagine). 3 N-linked (GlcNAc...) asparagine glycosylation sites follow: N370, N405, and N421. Residues 454–456 carry the GAS motif; ion selectivity filter motif; that stretch reads GAS. The helical transmembrane segment at 460–480 threads the bilayer; it reads IIEIIEYFFTNFYWVLIFFLL. Residues 481–495 lie on the Cytoplasmic side of the membrane; sequence KILETIQRTSPPQAV.

This sequence belongs to the amiloride-sensitive sodium channel (TC 1.A.6) family. ASIC5 subfamily. As to quaternary structure, forms homotrimeric channels. As to expression, expressed by cholangiocytes (at protein level). Detected in cerebellum, brainstem, kidney, liver, hepatocytes, lung, intestine and embryo. In the cerebellum, restricted to interneurons in the granular layer, specifically in GRM1-expressing unipolar brush cells of the vestibulocerebellum.

It localises to the apical cell membrane. The protein resides in the cell membrane. The catalysed reaction is Na(+)(in) = Na(+)(out). It catalyses the reaction Li(+)(in) = Li(+)(out). It carries out the reaction K(+)(in) = K(+)(out). The enzyme catalyses H(+)(in) = H(+)(out). Its activity is regulated as follows. Inhibited by the diuretic drug amiloride. Contrary to its rat ortholog it is not inhibited by Ca(2+). In terms of biological role, forms bile acid-gated sodium channels and may play a role in bile acid-dependent absorption and secretion by epithelial cells of the bile ducts. Displays high selectivity for sodium ions but can also permit the permeation of other cations. The gating could be indirect and the consequence of alterations of the membrane environment of the channel by bile acids. As a sodium channel of type II unipolar brush cells of the vestibulocerebellum, controlling the electrical activity of these cells, could play a role in motor coordination and balance. The sequence is that of Bile acid-sensitive ion channel from Mus musculus (Mouse).